The chain runs to 534 residues: Probable protein kinase UbiB (534 aa).

A helical transmembrane segment spans residues 23–43 (DLLFALPLPWFLLAVRYVLPW). In terms of domain architecture, Protein kinase spans 125–492 (RFDVDPLASA…WKKRKDDWFL (368 aa)). Residues 131 to 139 (LASASVAQV) and K153 each bind ATP. The Proton acceptor role is filled by D288. 2 consecutive transmembrane segments (helical) span residues 490-510 (WFLRLLGAAHLVGGVMLAIGG) and 512-532 (LNQLGHWPAGIMVAVGVYLIV).

Belongs to the ABC1 family. UbiB subfamily.

It is found in the cell inner membrane. It functions in the pathway cofactor biosynthesis; ubiquinone biosynthesis [regulation]. Functionally, is probably a protein kinase regulator of UbiI activity which is involved in aerobic coenzyme Q (ubiquinone) biosynthesis. The protein is Probable protein kinase UbiB of Pseudomonas fluorescens (strain SBW25).